A 293-amino-acid polypeptide reads, in one-letter code: MIETNDSLRDCLAPAKLNLFLHITGRLPNGYHALQTVFQLLDWGDTLHFTRRDDGAITRGTDIVDVPADADLTVRAAKLLKEHTGTREGVNIEIDKRLPMGAGLGGGSSDAATTLLALNRLWKLNLPRAELQVLSVKLGADVPFFVFGKNAFAEGIGEELEQVQLPPRHFLVVTPRVHVPTSAIFSEKELTRDTKPLTIADFLAQHSCSAEWPDSFGRNDMQQVVAGKYAEVAQVLRWFDNIAPARMTGSGASVFAAFRSKDEAVAAHAKLPVGWSGAVTASLDTHPLFAFAA.

Lysine 16 is a catalytic residue. 99–109 (PMGAGLGGGSS) lines the ATP pocket. Residue aspartate 141 is part of the active site.

This sequence belongs to the GHMP kinase family. IspE subfamily.

It catalyses the reaction 4-CDP-2-C-methyl-D-erythritol + ATP = 4-CDP-2-C-methyl-D-erythritol 2-phosphate + ADP + H(+). It participates in isoprenoid biosynthesis; isopentenyl diphosphate biosynthesis via DXP pathway; isopentenyl diphosphate from 1-deoxy-D-xylulose 5-phosphate: step 3/6. Catalyzes the phosphorylation of the position 2 hydroxy group of 4-diphosphocytidyl-2C-methyl-D-erythritol. In Paraburkholderia phymatum (strain DSM 17167 / CIP 108236 / LMG 21445 / STM815) (Burkholderia phymatum), this protein is 4-diphosphocytidyl-2-C-methyl-D-erythritol kinase.